The following is a 1032-amino-acid chain: Leucine-rich repeat and coiled-coil domain-containing protein 1 (1032 aa).

5 LRR repeats span residues 44-65 (TLHA…DHIW), 66-87 (NLQH…NTLT), 88-109 (KLCT…EELI), 110-131 (NLTR…IPLH), and 136-157 (KLRY…LQCM). Residues 175-218 (NPVCRLPGYRAVILQTLPQLRILDCKNIFGEPVNLTEINSSQLQ) form the LRRCT domain. Residues 316–345 (DNVLEKDPRPKRDTDITSESDYGNRKECNR) are disordered. Over residues 318-330 (VLEKDPRPKRDTD) the composition is skewed to basic and acidic residues. The stretch at 421–647 (NTYQSLVEQL…DLENEFRIAL (227 aa)) forms a coiled coil.

The protein belongs to the LRRCC1 family.

Its subcellular location is the cytoplasm. The protein localises to the cytoskeleton. It localises to the microtubule organizing center. It is found in the centrosome. The protein resides in the centriole. In terms of biological role, required for the organization of the mitotic spindle. Maintains the structural integrity of centrosomes during mitosis. This is Leucine-rich repeat and coiled-coil domain-containing protein 1 (LRRCC1) from Homo sapiens (Human).